Here is a 189-residue protein sequence, read N- to C-terminus: Keratin-associated protein 5-2 (189 aa).

8 repeat units span residues Cys21 to Pro24, Cys27 to Pro30, Cys33 to Pro36, Cys134 to Pro137, Cys144 to Pro147, Cys159 to Pro162, Cys169 to Pro172, and Cys179 to Pro182. The 8 X 4 AA repeats of C-C-X-P stretch occupies residues Cys27–Pro182.

The protein belongs to the KRTAP type 5 family. As to quaternary structure, interacts with hair keratins.

Its function is as follows. In the hair cortex, hair keratin intermediate filaments are embedded in an interfilamentous matrix, consisting of hair keratin-associated protein (KRTAP), which are essential for the formation of a rigid and resistant hair shaft through their extensive disulfide bond cross-linking with abundant cysteine residues of hair keratins. The matrix proteins include the high-sulfur and high-glycine-tyrosine keratins. The polypeptide is Keratin-associated protein 5-2 (Mus musculus (Mouse)).